The following is a 252-amino-acid chain: Ribosome maturation factor RimP (252 aa).

The tract at residues 188–252 is disordered; that stretch reads QGAAPGTEGG…PAAGPGAQDE (65 aa). Basic residues predominate over residues 208 to 224; the sequence is ARRPHQPKPKKAKKKGP.

The protein belongs to the RimP family.

Its subcellular location is the cytoplasm. Its function is as follows. Required for maturation of 30S ribosomal subunits. In Rhodospirillum centenum (strain ATCC 51521 / SW), this protein is Ribosome maturation factor RimP.